Reading from the N-terminus, the 276-residue chain is MGNKLFVLDLGEIRVDENFIIANSTFVTPQKPTVSSRLIDIPVSAYLIQCTNATILYDTGCHPECMGTNGRWPAQSQLNAPYIGASECNLPERLRQLDLSPDDISTVVLSHLHNDHAGCVEFFGKSRLIAHEDEFATAVRYFATGDHSSPYIVKDIEAWLATPRNWDLVGRDERERELAPGVNLLNFGTGHASGMLGLAVRLEKQPGFLLVSDACYTATNYGPPARRAGVLHDTIGYDRTVSHIRQYAESRSLTVLFGHDREQFASLIKSTDGFYE.

Residues His111, His113, His116, His191, Asp213, and His259 each contribute to the Zn(2+) site.

It belongs to the metallo-beta-lactamase superfamily. It depends on Zn(2+) as a cofactor.

It catalyses the reaction an N-acyl-L-homoserine lactone + H2O = an N-acyl-L-homoserine + H(+). The protein is N-acyl homoserine lactonase AiiB of Rhizobium rhizogenes (strain K84 / ATCC BAA-868) (Agrobacterium radiobacter).